Reading from the N-terminus, the 229-residue chain is Heptaprenylglyceryl phosphate synthase (229 aa).

A sn-glycerol 1-phosphate-binding site is contributed by Lys-12. Residues Asp-14 and Ser-40 each coordinate Mg(2+). Sn-glycerol 1-phosphate is bound by residues 159–164 (YLEYSG), Gly-189, and 209–210 (GN).

The protein belongs to the GGGP/HepGP synthase family. Group I subfamily. Homodimer. Mg(2+) serves as cofactor.

It carries out the reaction sn-glycerol 1-phosphate + all-trans-heptaprenyl diphosphate = 3-heptaprenyl-sn-glycero-1-phosphate + diphosphate. The protein operates within membrane lipid metabolism; glycerophospholipid metabolism. Functionally, prenyltransferase that catalyzes in vivo the transfer of the heptaprenyl moiety of heptaprenyl pyrophosphate (HepPP; 35 carbon atoms) to the C3 hydroxyl of sn-glycerol-1-phosphate (G1P), producing heptaprenylglyceryl phosphate (HepGP). This reaction is an ether-bond-formation step in the biosynthesis of archaea-type G1P-based membrane lipids found in Bacillales. The polypeptide is Heptaprenylglyceryl phosphate synthase (Bacillus cereus (strain ZK / E33L)).